The primary structure comprises 288 residues: Homoserine kinase (288 aa).

79–89 (PPARGLGSSSA) contributes to the ATP binding site.

It belongs to the GHMP kinase family. Homoserine kinase subfamily.

Its subcellular location is the cytoplasm. It catalyses the reaction L-homoserine + ATP = O-phospho-L-homoserine + ADP + H(+). It participates in amino-acid biosynthesis; L-threonine biosynthesis; L-threonine from L-aspartate: step 4/5. Catalyzes the ATP-dependent phosphorylation of L-homoserine to L-homoserine phosphate. This Listeria welshimeri serovar 6b (strain ATCC 35897 / DSM 20650 / CCUG 15529 / CIP 8149 / NCTC 11857 / SLCC 5334 / V8) protein is Homoserine kinase.